A 106-amino-acid polypeptide reads, in one-letter code: Integration host factor subunit beta (106 aa).

A disordered region spans residues 57-106 (PARAGRNPRTGEHVPVEQKSVPFFKTGKEMRERLNRDGLDGATPPSPPAA). The span at 82–95 (TGKEMRERLNRDGL) shows a compositional bias: basic and acidic residues.

Belongs to the bacterial histone-like protein family. In terms of assembly, heterodimer of an alpha and a beta chain.

Its function is as follows. This protein is one of the two subunits of integration host factor, a specific DNA-binding protein that functions in genetic recombination as well as in transcriptional and translational control. This chain is Integration host factor subunit beta, found in Afipia carboxidovorans (strain ATCC 49405 / DSM 1227 / KCTC 32145 / OM5) (Oligotropha carboxidovorans).